Consider the following 209-residue polypeptide: MGKFQVISHPLIQHKLSILRRTSTSTKDFRELVNEIAMLMGYEVLRDLPLEDVEIETPITKTVQKQIAGKKLAIVPILRAGVGMVDGLLSLVPAAKVGHIGMYRDEETLQPVEYLVKLPEDIDQRHIFVVDPMLATGGSAILAVDSLKKRGASNIKFVALVSAPEGVKALQDAHPDIDIYTAALDEKLNEKGYIVPGLGDAGDRLFGTK.

Residues arginine 79, arginine 104, and 131 to 139 each bind 5-phospho-alpha-D-ribose 1-diphosphate; that span reads DPMLATGGS. Uracil is bound by residues isoleucine 194 and 199-201; that span reads GDA. Residue aspartate 200 coordinates 5-phospho-alpha-D-ribose 1-diphosphate.

It belongs to the UPRTase family. Requires Mg(2+) as cofactor.

The enzyme catalyses UMP + diphosphate = 5-phospho-alpha-D-ribose 1-diphosphate + uracil. It participates in pyrimidine metabolism; UMP biosynthesis via salvage pathway; UMP from uracil: step 1/1. Allosterically activated by GTP. Its function is as follows. Catalyzes the conversion of uracil and 5-phospho-alpha-D-ribose 1-diphosphate (PRPP) to UMP and diphosphate. The chain is Uracil phosphoribosyltransferase from Streptococcus suis (strain 05ZYH33).